The sequence spans 585 residues: Frizzled-5 (585 aa).

The first 26 residues, 1 to 26 (MARPDPSAPPSLLLLLLAQLVGRAAA), serve as a signal peptide directing secretion. Residues 27-238 (ASKAPVCQEI…ADERTFATFW (212 aa)) are Extracellular-facing. The FZ domain maps to 28-150 (SKAPVCQEIT…RDAEVLCMDY (123 aa)). 5 disulfides stabilise this stretch: cysteine 33–cysteine 94, cysteine 41–cysteine 87, cysteine 78–cysteine 116, cysteine 105–cysteine 147, and cysteine 109–cysteine 133. Residue asparagine 47 is glycosylated (N-linked (GlcNAc...) asparagine). An N-linked (GlcNAc...) asparagine glycan is attached at asparagine 151. The interval 156 to 179 (TTAPPRPFPAKPTLPGPPGAPASG) is disordered. The segment covering 159–175 (PPRPFPAKPTLPGPPGA) has biased composition (pro residues). The chain crosses the membrane as a helical span at residues 239–259 (IGLWSVLCFISTSTTVATFLI). Topologically, residues 260 to 270 (DMERFRYPERP) are cytoplasmic. Residues 271–291 (IIFLSACYLCVSLGFLVRLVV) traverse the membrane as a helical segment. Residues 292 to 315 (GHASVACSREHNHIHYETTGPALC) lie on the Extracellular side of the membrane. A helical transmembrane segment spans residues 316 to 336 (TIVFLLVYFFGMASSIWWVIL). At 337–358 (SLTWFLAAGMKWGNEAIAGYAQ) the chain is on the cytoplasmic side. The chain crosses the membrane as a helical span at residues 359–379 (YFHLAAWLIPSVKSITALALS). The Extracellular segment spans residues 380 to 402 (SVDGDPVAGICYVGNQNLNSLRG). The helical transmembrane segment at 403–423 (FVLGPLVLYLLVGTLFLLAGF) threads the bilayer. The Cytoplasmic portion of the chain corresponds to 424–449 (VSLFRIRSVIKQGGTKTDKLEKLMIR). The helical transmembrane segment at 450 to 470 (IGIFTLLYTVPASIVVACYLY) threads the bilayer. Over 471–500 (EQHYRESWEAALTCACPGHDTGQPRAKPEY) the chain is Extracellular. The helical transmembrane segment at 501-521 (WVLMLKYFMCLVVGITSGVWI) threads the bilayer. The Cytoplasmic segment spans residues 522-585 (WSGKTVESWR…YHKQVSLSHV (64 aa)). The Lys-Thr-X-X-X-Trp motif, mediates interaction with the PDZ domain of Dvl family members motif lies at 525–530 (KTVESW). The PDZ-binding signature appears at 583–585 (SHV).

Belongs to the G-protein coupled receptor Fz/Smo family. In terms of assembly, binding of unsaturated fatty acid molecules (via FZ domain) promotes homodimerization. Interacts with WNT2B. Interacts with WNT3A. Interacts with WNT7A. Interacts with GOPC. Post-translationally, ubiquitinated by RNF43 and ZNRF3, leading to its degradation by the proteasome.

It localises to the cell membrane. The protein localises to the golgi apparatus membrane. The protein resides in the synapse. It is found in the perikaryon. Its subcellular location is the cell projection. It localises to the dendrite. The protein localises to the axon. In terms of biological role, receptor for Wnt proteins. Functions in the canonical Wnt/beta-catenin signaling pathway. In vitro activates WNT2, WNT10B, WNT5A, but not WNT2B or WNT4 signaling. In neurons, activation by WNT7A promotes formation of synapses. May be involved in transduction and intercellular transmission of polarity information during tissue morphogenesis and/or in differentiated tissues. Plays a role in yolk sac angiogenesis and in placental vascularization. Plays a role in ocular development. This Homo sapiens (Human) protein is Frizzled-5 (FZD5).